The sequence spans 605 residues: Protein ZRG17 (605 aa).

The Cytoplasmic segment spans residues 1 to 225 (METPQMNAIQ…DLLSNLPWPK (225 aa)). A phosphoserine mark is found at Ser-16 and Ser-131. The disordered stretch occupies residues 118 to 178 (PAPKLVPPPP…PSSAASRTSF (61 aa)). Over residues 143–176 (SKRSSMTLDSPFNFTTSTLQPHQQTPPSSAASRT) the composition is skewed to polar residues. Residues 226-246 (AYIQLSIAALQIFACLITFQV) traverse the membrane as a helical segment. Topologically, residues 247-254 (GHLYSWSN) are lumenal. A helical membrane pass occupies residues 255-275 (FITLSHFITYDIIGSLVIIFV). Residues 276–287 (ENLSQFQVWFTG) are Cytoplasmic-facing. The chain crosses the membrane as a helical span at residues 288–308 (TITFPFGLNRIDVLLSFALAV). Ser-309 is a topological domain (lumenal). A helical membrane pass occupies residues 310-330 (LCFVGLDLLFHIIEEFIVLFV). Residues 331 to 363 (ESGSSLTNNHDHDEINEQIPHSHIANANDSQNE) lie on the Cytoplasmic side of the membrane. A helical transmembrane segment spans residues 364 to 384 (NITLWYSILMINLVLSTLSLY). Residues 385–399 (KTFYANKYSNLKTKN) lie on the Lumenal side of the membrane. A helical membrane pass occupies residues 400-420 (PIITITYTAYLFIYPLLLDLL). At 421–422 (SS) the chain is on the cytoplasmic side. Residues 423 to 443 (ISDYLATLVISSLILWHGLTI) traverse the membrane as a helical segment. Residues 444-545 (ARWTSTVLLM…ERLSEFKSRY (102 aa)) are Lumenal-facing. A compositionally biased stretch (polar residues) spans 473-482 (DTTAHTQQVE). Residues 473–497 (DTTAHTQQVESKAAKEKPSVRPRSM) are disordered. Ser-498 carries the phosphoserine modification. Residues 546-566 (ILNYDDIVISKVNFTLYVVLI) traverse the membrane as a helical segment. Residues 567-605 (KITMKGGSDDDELMLRLAIDKCIQTSIPTCETTIDIDRI) lie on the Cytoplasmic side of the membrane.

The protein resides in the endoplasmic reticulum membrane. The polypeptide is Protein ZRG17 (ZRG17) (Saccharomyces cerevisiae (strain ATCC 204508 / S288c) (Baker's yeast)).